Here is a 510-residue protein sequence, read N- to C-terminus: 2,3-bisphosphoglycerate-independent phosphoglycerate mutase (510 aa).

Mn(2+)-binding residues include Asp-12 and Ser-62. Ser-62 functions as the Phosphoserine intermediate in the catalytic mechanism. Residues His-123, Arg-153–Asp-154, Arg-185, Arg-191, Arg-261–Arg-264, and Lys-336 each bind substrate. The Mn(2+) site is built by Asp-403, His-407, Asp-444, His-445, and His-462.

This sequence belongs to the BPG-independent phosphoglycerate mutase family. Monomer. The cofactor is Mn(2+).

The catalysed reaction is (2R)-2-phosphoglycerate = (2R)-3-phosphoglycerate. It participates in carbohydrate degradation; glycolysis; pyruvate from D-glyceraldehyde 3-phosphate: step 3/5. Essential for rapid growth and for sporulation. Catalyzes the interconversion of 2-phosphoglycerate and 3-phosphoglycerate. In Priestia megaterium (strain ATCC 12872 / QMB1551) (Bacillus megaterium), this protein is 2,3-bisphosphoglycerate-independent phosphoglycerate mutase.